The following is a 173-amino-acid chain: Gamma-crystallin S-1 (173 aa).

2 consecutive Beta/gamma crystallin 'Greek key' domains span residues G2–S40 and D41–P83. Residues H84–S88 form a connecting peptide region. Beta/gamma crystallin 'Greek key' domains lie at Y89–D129 and G130–M172.

This sequence belongs to the beta/gamma-crystallin family.

Functionally, crystallins are the dominant structural components of the vertebrate eye lens. The sequence is that of Gamma-crystallin S-1 (GS-1) from Chiloscyllium indicum (Slender bamboo shark).